Here is an 859-residue protein sequence, read N- to C-terminus: Leucine--tRNA ligase (859 aa).

The 'HIGH' region motif lies at 42-52 (PYPSGRLHMGH). Positions 618-622 (KMSKS) match the 'KMSKS' region motif. Lys621 contacts ATP.

The protein belongs to the class-I aminoacyl-tRNA synthetase family.

Its subcellular location is the cytoplasm. It catalyses the reaction tRNA(Leu) + L-leucine + ATP = L-leucyl-tRNA(Leu) + AMP + diphosphate. In Shewanella woodyi (strain ATCC 51908 / MS32), this protein is Leucine--tRNA ligase.